The sequence spans 549 residues: MNRRQTWSLLLIAFGLFYLVPLSNHGLWIPDETRYAQISQAMLLGGDWVSPHFLGLRYFEKPVAGYWMIALGQAVFGENLFGVRIASVVATALSVLLAYLLARRLWRDPRTSLACALLYASFGLIAGQSGYANLDPQFTFWVNLSLVALWYALDAGSRRARLLGWTLLGLACGMGFLTKGFLAWLLPVLVALPYMLWQRRWRELLGYGALAVLVALLVCLPWALAVHAREADYWRFFFWHEHIRRFAGEDAQHSRPWWFYLPLLAVACLPWSGLLPSALRQAWHERHQPPVAFLALWLLLPLAFFSLSRGKLPTYIMPCLLPLALLMGHALVQRLRQADSLALRGNGLLNLGLALLALAALAYLQLRKPVYQEEPFELFLVLLVIGAWAAAGLAQWRYPLRAWAAPLLASWVLIALLPAAMPNQVVQNKTPDLFVAEHLDELTGARHLLSNDLGAASALAWRLRRGDVTLYDTRGELKYGLSYPEHSQRSVPLADIRQWLWRARQDGSVAVLLRINSASDRYQLALLPGDGERYRNGNLVLAVLPQVRP.

The next 12 helical transmembrane spans lie at Leu9–Ile29, Leu80–Leu100, Ser112–Ala132, Pro136–Gly156, Phe176–Leu196, Leu204–Leu224, Pro256–Pro276, Gln288–Ser308, Leu312–Val332, Asn346–Leu366, Phe376–Trp396, and Ala402–Pro422.

This sequence belongs to the glycosyltransferase 83 family.

The protein localises to the cell inner membrane. It carries out the reaction 4-amino-4-deoxy-alpha-L-arabinopyranosyl di-trans,octa-cis-undecaprenyl phosphate + lipid IVA = lipid IIA + di-trans,octa-cis-undecaprenyl phosphate.. The protein operates within lipopolysaccharide metabolism; 4-amino-4-deoxy-beta-L-arabinose-lipid A biosynthesis. Functionally, catalyzes the transfer of the L-Ara4N moiety of the glycolipid undecaprenyl phosphate-alpha-L-Ara4N to lipid A. The modified arabinose is attached to lipid A and is required for resistance to polymyxin and cationic antimicrobial peptides. This chain is Undecaprenyl phosphate-alpha-4-amino-4-deoxy-L-arabinose arabinosyl transferase, found in Pseudomonas paraeruginosa (strain DSM 24068 / PA7) (Pseudomonas aeruginosa (strain PA7)).